The primary structure comprises 315 residues: Olfactory receptor 52R1 (315 aa).

The Extracellular portion of the chain corresponds to 1 to 28; it reads MVLASGNSSSHPVSFILLGIPGLESFQL. Asparagine 7 carries N-linked (GlcNAc...) asparagine glycosylation. The chain crosses the membrane as a helical span at residues 29-49; the sequence is WIAFPFCATYAVAVVGNITLL. Topologically, residues 50–57 are cytoplasmic; sequence HVIRIDHT. The helical transmembrane segment at 58 to 78 threads the bilayer; that stretch reads LHEPMYLFLAMLAITDLVLSS. The Extracellular segment spans residues 79–102; sequence STQPKMLAIFWFHAHEIQYHACLI. A disulfide bridge links cysteine 100 with cysteine 192. Residues 103–123 traverse the membrane as a helical segment; it reads QVFFIHAFSSVESGVLMAMAL. Topologically, residues 124–142 are cytoplasmic; that stretch reads DCYVAICFPLRHSSILTPS. The helical transmembrane segment at 143-163 threads the bilayer; that stretch reads VVIKLGTIVMLRGLLWVSPFC. At 164-199 the chain is on the extracellular side; it reads FMVSRMPFCQHQAIPQSYCEHMAVLKLVCADTSISR. Residues 200–220 form a helical membrane-spanning segment; that stretch reads GNGLFVAFSVAGFDMIVIGMS. The Cytoplasmic portion of the chain corresponds to 221–240; the sequence is YVMILRAVLQLPSGEARLKA. A helical membrane pass occupies residues 241–261; sequence FSTRSSHICVILALYIPALFS. Topologically, residues 262 to 276 are extracellular; that stretch reads FLTYRFGHDVPRVVH. The chain crosses the membrane as a helical span at residues 277-297; the sequence is ILFANLYLLIPPMLNPIIYGV. At 298–315 the chain is on the cytoplasmic side; it reads RTKQIGDRVIQGCCGNIP.

Belongs to the G-protein coupled receptor 1 family.

It localises to the cell membrane. In terms of biological role, odorant receptor. In Homo sapiens (Human), this protein is Olfactory receptor 52R1 (OR52R1).